Here is a 222-residue protein sequence, read N- to C-terminus: NADH dehydrogenase [ubiquinone] iron-sulfur protein 8-B, mitochondrial (222 aa).

2 consecutive 4Fe-4S ferredoxin-type domains span residues 114–143 and 153–182; these read RRYP…IEAE and TRYD…EGPN. [4Fe-4S] cluster contacts are provided by cysteine 123, cysteine 126, cysteine 129, cysteine 133, cysteine 162, cysteine 165, cysteine 168, and cysteine 172.

Belongs to the complex I 23 kDa subunit family. Complex I is composed of at least 49 different subunits. This is a component of the iron-sulfur (IP) fragment of the enzyme. [4Fe-4S] cluster serves as cofactor.

The protein resides in the mitochondrion. The enzyme catalyses a ubiquinone + NADH + 5 H(+)(in) = a ubiquinol + NAD(+) + 4 H(+)(out). In terms of biological role, core subunit of the mitochondrial membrane respiratory chain NADH dehydrogenase (Complex I) that is believed to belong to the minimal assembly required for catalysis. Complex I functions in the transfer of electrons from NADH to the respiratory chain. The immediate electron acceptor for the enzyme is believed to be ubiquinone. May donate electrons to ubiquinone. The protein is NADH dehydrogenase [ubiquinone] iron-sulfur protein 8-B, mitochondrial of Arabidopsis thaliana (Mouse-ear cress).